The chain runs to 415 residues: Isocitrate dehydrogenase [NADP] 1 (415 aa).

Thr104 is a binding site for NADP(+). D-threo-isocitrate contacts are provided by Ser113, Asn115, Arg119, Arg129, and Arg153. Asp307 lines the Mg(2+) pocket. NADP(+) contacts are provided by residues 339 to 345 (HGTAPKY), Asn352, Tyr390, and Arg394.

Belongs to the isocitrate and isopropylmalate dehydrogenases family. Homodimer. It depends on Mg(2+) as a cofactor. Mn(2+) serves as cofactor.

It carries out the reaction D-threo-isocitrate + NADP(+) = 2-oxoglutarate + CO2 + NADPH. Catalyzes the oxidative decarboxylation of isocitrate to 2-oxoglutarate and carbon dioxide with the concomitant reduction of NADP(+). This is Isocitrate dehydrogenase [NADP] 1 from Colwellia maris.